The primary structure comprises 186 residues: dCTP deaminase (186 aa).

Position 107–112 (107–112 (KSTYAR)) interacts with dCTP. E133 (proton donor/acceptor) is an active-site residue. Q152, Y166, and Q176 together coordinate dCTP.

This sequence belongs to the dCTP deaminase family. In terms of assembly, homotrimer.

The enzyme catalyses dCTP + H2O + H(+) = dUTP + NH4(+). It functions in the pathway pyrimidine metabolism; dUMP biosynthesis; dUMP from dCTP (dUTP route): step 1/2. Functionally, catalyzes the deamination of dCTP to dUTP. This Campylobacter jejuni subsp. jejuni serotype O:6 (strain 81116 / NCTC 11828) protein is dCTP deaminase.